Reading from the N-terminus, the 68-residue chain is Sperm-associated antigen 11A (68 aa).

The signal sequence occupies residues 1–19 (MKVLLLFAVFFCLVQRNSG). Disulfide bonds link cysteine 30–cysteine 59, cysteine 37–cysteine 52, and cysteine 42–cysteine 60.

The protein belongs to the beta-defensin family. As to expression, only expressed in epididymis (middle part of the caput).

The protein localises to the secreted. Functionally, has antimicrobial activity against E.coli. Plays a role in the defense response in the male reproductive tract, contributing to sperm maturation, storage and protection. The sequence is that of Sperm-associated antigen 11A from Rattus norvegicus (Rat).